Reading from the N-terminus, the 20-residue chain is D-alpha-glycerophosphatase (20 aa).

As to quaternary structure, monomer. Requires Mg(2+) as cofactor. The cofactor is Mn(2+).

The protein localises to the cytoplasm. It functions in the pathway polyol metabolism; glycerol biosynthesis. This chain is D-alpha-glycerophosphatase, found in Bacillus licheniformis.